The chain runs to 156 residues: MAKKKSKSPGTLAENRKARHDYNIEDTIEAGIALRGTEIKSIRRGSANLKDSFAQVRRGEMYLNNMHIAPYEEGNRFNHDPLRTRKLLLHKKEIQKLGERTREIGYSIIPLKLYLKHGQCKVLLGVARGKKKYDKRQALKEKAVKRDIDRAVKARY.

The protein belongs to the SmpB family.

It localises to the cytoplasm. In terms of biological role, required for rescue of stalled ribosomes mediated by trans-translation. Binds to transfer-messenger RNA (tmRNA), required for stable association of tmRNA with ribosomes. tmRNA and SmpB together mimic tRNA shape, replacing the anticodon stem-loop with SmpB. tmRNA is encoded by the ssrA gene; the 2 termini fold to resemble tRNA(Ala) and it encodes a 'tag peptide', a short internal open reading frame. During trans-translation Ala-aminoacylated tmRNA acts like a tRNA, entering the A-site of stalled ribosomes, displacing the stalled mRNA. The ribosome then switches to translate the ORF on the tmRNA; the nascent peptide is terminated with the 'tag peptide' encoded by the tmRNA and targeted for degradation. The ribosome is freed to recommence translation, which seems to be the essential function of trans-translation. The polypeptide is SsrA-binding protein (Staphylococcus epidermidis (strain ATCC 35984 / DSM 28319 / BCRC 17069 / CCUG 31568 / BM 3577 / RP62A)).